A 738-amino-acid chain; its full sequence is Glucan 1,4-alpha-glucosidase SusB (738 aa).

The first 21 residues, 1-21 (MKKRKILSLIAFLCISFIANA), serve as a signal peptide directing secretion. Glu-194 is a binding site for Ca(2+). Substrate is bound by residues 215–217 (PNS), 437–439 (HHE), and 507–508 (HE). Ca(2+)-binding residues include Glu-508, Glu-526, and Glu-532. Glu-532 serves as the catalytic Proton donor/acceptor.

The protein belongs to the glycosyl hydrolase 97 family. As to quaternary structure, monomer. The cofactor is Ca(2+).

The protein localises to the periplasm. The enzyme catalyses Hydrolysis of terminal (1-&gt;4)-linked alpha-D-glucose residues successively from non-reducing ends of the chains with release of beta-D-glucose.. It functions in the pathway glycan degradation; starch degradation. Glucoamylase that hydrolyzes alpha-1,4-glucosidic linkages, alpha-1,6-, alpha-1,3- and alpha-1,2-glucosidic linkages during starch degradation. The chain is Glucan 1,4-alpha-glucosidase SusB (susB) from Bacteroides thetaiotaomicron (strain ATCC 29148 / DSM 2079 / JCM 5827 / CCUG 10774 / NCTC 10582 / VPI-5482 / E50).